Here is a 204-residue protein sequence, read N- to C-terminus: Pantothenate transporter PanT (204 aa).

The next 6 membrane-spanning stretches (helical) occupy residues 18 to 38, 39 to 59, 63 to 83, 86 to 106, 123 to 143, and 176 to 196; these read IILL…AVIV, GAQP…LGAR, FIGG…PGSI, LMFQ…LIIG, LGLG…VVLL, and IFEI…LVPI.

As to quaternary structure, in E.coli forms a stable energy-coupling factor (ECF) transporter complex probably composed of a membrane-embedded substrate-binding protein (S component), two ATP-binding proteins (A components) and a transmembrane protein (T component).

The protein localises to the cell membrane. Its function is as follows. Probable pantothenate-binding protein that interacts with the energy-coupling factor (ECF) ABC-transporter complex. Unlike classic ABC transporters this ECF transporter provides the energy necessary to transport a number of different substrates. The substrates themselves are bound by transmembrane, not extracytoplasmic soluble proteins and transport it into cells. Upon coexpression with its energy-coupling factor (ECF) ABC-transporter complex EcfA1A2T in E.coli allows pantothenate uptake; uptake requires both PanT and EcfA1A2T. This is Pantothenate transporter PanT (panT) from Leuconostoc mesenteroides subsp. mesenteroides (strain ATCC 8293 / DSM 20343 / BCRC 11652 / CCM 1803 / JCM 6124 / NCDO 523 / NBRC 100496 / NCIMB 8023 / NCTC 12954 / NRRL B-1118 / 37Y).